The primary structure comprises 197 residues: ATP-dependent Clp protease proteolytic subunit (197 aa).

Residue S98 is the Nucleophile of the active site. The active site involves H123.

It belongs to the peptidase S14 family. In terms of assembly, fourteen ClpP subunits assemble into 2 heptameric rings which stack back to back to give a disk-like structure with a central cavity, resembling the structure of eukaryotic proteasomes.

It is found in the cytoplasm. It carries out the reaction Hydrolysis of proteins to small peptides in the presence of ATP and magnesium. alpha-casein is the usual test substrate. In the absence of ATP, only oligopeptides shorter than five residues are hydrolyzed (such as succinyl-Leu-Tyr-|-NHMec, and Leu-Tyr-Leu-|-Tyr-Trp, in which cleavage of the -Tyr-|-Leu- and -Tyr-|-Trp bonds also occurs).. Cleaves peptides in various proteins in a process that requires ATP hydrolysis. Has a chymotrypsin-like activity. Plays a major role in the degradation of misfolded proteins. The polypeptide is ATP-dependent Clp protease proteolytic subunit (Enterococcus faecalis (strain ATCC 700802 / V583)).